The following is a 1562-amino-acid chain: NAC-alpha domain-containing protein 1 (1562 aa).

The span at 1 to 13 shows a compositional bias: low complexity; that stretch reads MPGEAARAELLLP. Disordered stretches follow at residues 1-24, 56-110, 131-226, 249-288, 327-365, 381-458, 503-941, and 953-1423; these read MPGEAARAELLLPEADRPGPRTDL, FLPS…TEAP, SPRA…ADGD, SGWGLSPQGSMVDERELHPAGTPEPPSSESSLSADSSSSW, TPLSPEEEEEEAVADPDPGGDLAGEGEEDSTSASFLQSL, RDDT…GAYL, TPQA…EPLA, and GCAP…AMSK. Positions 195–208 are enriched in basic and acidic residues; sequence GDARDSEAELRDEL. The span at 275–287 shows a compositional bias: low complexity; that stretch reads SSESSLSADSSSS. The span at 331–340 shows a compositional bias: acidic residues; it reads PEEEEEEAVA. A compositionally biased stretch (low complexity) spans 385-397; sequence SAASSDSDSASYA. 2 stretches are compositionally biased toward polar residues: residues 449 to 458 and 550 to 564; these read PQTSDRGAYL and QEETSLTLCPDSPQN. Residues 992-1007 show a composition bias toward low complexity; that stretch reads PAALDQVQQDDPQPAA. A compositionally biased stretch (basic and acidic residues) spans 1048 to 1074; it reads PGREACLEARAHTGDGAKPDSPQKETL. Residue Ser1068 is modified to Phosphoserine. 2 stretches are compositionally biased toward low complexity: residues 1172-1182 and 1231-1241; these read APTSAPTSQQP and APGTLAGAALP. A compositionally biased stretch (acidic residues) spans 1254–1264; the sequence is PQEDSVEDEEP. 3 stretches are compositionally biased toward low complexity: residues 1265–1284, 1298–1308, and 1335–1344; these read PGSLGLPPPQAGVQPAAAAV, SLSPHSPLLSP, and QSPAGPQGLS. The segment covering 1348-1357 has biased composition (acidic residues); that stretch reads QQEDEDSLEE. Position 1354 is a phosphoserine (Ser1354). The NAC-A/B domain maps to 1411–1476; that stretch reads SRSEKKARKA…AKIEDLSQQV (66 aa).

It belongs to the NAC-alpha family.

Its subcellular location is the cytoplasm. It localises to the nucleus. Its function is as follows. May prevent inappropriate targeting of non-secretory polypeptides to the endoplasmic reticulum (ER). May bind to nascent polypeptide chains as they emerge from the ribosome and block their interaction with the signal recognition particle (SRP), which normally targets nascent secretory peptides to the ER. May also reduce the inherent affinity of ribosomes for protein translocation sites in the ER membrane (M sites). In Homo sapiens (Human), this protein is NAC-alpha domain-containing protein 1 (NACAD).